Consider the following 413-residue polypeptide: Gamma-glutamyl phosphate reductase (413 aa).

This sequence belongs to the gamma-glutamyl phosphate reductase family.

The protein resides in the cytoplasm. It catalyses the reaction L-glutamate 5-semialdehyde + phosphate + NADP(+) = L-glutamyl 5-phosphate + NADPH + H(+). It functions in the pathway amino-acid biosynthesis; L-proline biosynthesis; L-glutamate 5-semialdehyde from L-glutamate: step 2/2. Its function is as follows. Catalyzes the NADPH-dependent reduction of L-glutamate 5-phosphate into L-glutamate 5-semialdehyde and phosphate. The product spontaneously undergoes cyclization to form 1-pyrroline-5-carboxylate. The chain is Gamma-glutamyl phosphate reductase from Thermus thermophilus (strain ATCC BAA-163 / DSM 7039 / HB27).